Consider the following 503-residue polypeptide: AMP phosphorylase (503 aa).

AMP-binding positions include glycine 168, 194–199 (SRAITS), and threonine 203. Residue aspartate 256 is the Proton donor of the active site. 2 residues coordinate AMP: serine 264 and lysine 288.

The protein belongs to the thymidine/pyrimidine-nucleoside phosphorylase family. Type 2 subfamily.

The catalysed reaction is AMP + phosphate = alpha-D-ribose 1,5-bisphosphate + adenine. It catalyses the reaction CMP + phosphate = cytosine + alpha-D-ribose 1,5-bisphosphate. It carries out the reaction UMP + phosphate = alpha-D-ribose 1,5-bisphosphate + uracil. Its function is as follows. Catalyzes the conversion of AMP and phosphate to adenine and ribose 1,5-bisphosphate (R15P). Exhibits phosphorylase activity toward CMP and UMP in addition to AMP. Functions in an archaeal AMP degradation pathway, together with R15P isomerase and RubisCO. The sequence is that of AMP phosphorylase from Thermococcus sibiricus (strain DSM 12597 / MM 739).